Here is a 95-residue protein sequence, read N- to C-terminus: Small ribosomal subunit protein bS6 (95 aa).

This sequence belongs to the bacterial ribosomal protein bS6 family.

Functionally, binds together with bS18 to 16S ribosomal RNA. The chain is Small ribosomal subunit protein bS6 from Clostridium novyi (strain NT).